Here is a 216-residue protein sequence, read N- to C-terminus: Peptide methionine sulfoxide reductase MsrA (216 aa).

Cys-54 is a catalytic residue.

Belongs to the MsrA Met sulfoxide reductase family.

The catalysed reaction is L-methionyl-[protein] + [thioredoxin]-disulfide + H2O = L-methionyl-(S)-S-oxide-[protein] + [thioredoxin]-dithiol. It catalyses the reaction [thioredoxin]-disulfide + L-methionine + H2O = L-methionine (S)-S-oxide + [thioredoxin]-dithiol. In terms of biological role, has an important function as a repair enzyme for proteins that have been inactivated by oxidation. Catalyzes the reversible oxidation-reduction of methionine sulfoxide in proteins to methionine. The protein is Peptide methionine sulfoxide reductase MsrA of Xanthomonas euvesicatoria pv. vesicatoria (strain 85-10) (Xanthomonas campestris pv. vesicatoria).